Consider the following 100-residue polypeptide: MEIAVIGNSEFILGFRLAGITKTYAAESDEKVVEYVHKVLDDGKIGILVLNSSDMAKIPVRLRTTLENSVHPTVITLGEEEGGLSMRERIKRSVGVDLWK.

The protein belongs to the V-ATPase F subunit family. Has multiple subunits with at least A(3), B(3), C, D, E, F, H, I and proteolipid K(x).

It is found in the cell membrane. Component of the A-type ATP synthase that produces ATP from ADP in the presence of a proton gradient across the membrane. The polypeptide is A-type ATP synthase subunit F (Methanospirillum hungatei JF-1 (strain ATCC 27890 / DSM 864 / NBRC 100397 / JF-1)).